Reading from the N-terminus, the 262-residue chain is Small ribosomal subunit protein eS4y (262 aa).

Residues 42–104 (LPLVLIIRNR…TNENFRLLYD (63 aa)) enclose the S4 RNA-binding domain.

It belongs to the eukaryotic ribosomal protein eS4 family.

Its subcellular location is the cytoplasm. The polypeptide is Small ribosomal subunit protein eS4y (RPS4B) (Arabidopsis thaliana (Mouse-ear cress)).